Here is a 388-residue protein sequence, read N- to C-terminus: Phosphoglycerate kinase (388 aa).

Residues 21-23, R36, 59-62, R114, and R147 contribute to the substrate site; these read DLN and HLGR. ATP contacts are provided by residues K198, E315, and 341-344; that span reads GGDT.

This sequence belongs to the phosphoglycerate kinase family. In terms of assembly, monomer.

It localises to the cytoplasm. The enzyme catalyses (2R)-3-phosphoglycerate + ATP = (2R)-3-phospho-glyceroyl phosphate + ADP. Its pathway is carbohydrate degradation; glycolysis; pyruvate from D-glyceraldehyde 3-phosphate: step 2/5. This chain is Phosphoglycerate kinase, found in Buchnera aphidicola subsp. Schizaphis graminum (strain Sg).